We begin with the raw amino-acid sequence, 143 residues long: Large ribosomal subunit protein uL13 (143 aa).

It belongs to the universal ribosomal protein uL13 family. In terms of assembly, part of the 50S ribosomal subunit.

This protein is one of the early assembly proteins of the 50S ribosomal subunit, although it is not seen to bind rRNA by itself. It is important during the early stages of 50S assembly. This chain is Large ribosomal subunit protein uL13, found in Dehalococcoides mccartyi (strain CBDB1).